A 60-amino-acid chain; its full sequence is Large ribosomal subunit protein bL33 (60 aa).

Belongs to the bacterial ribosomal protein bL33 family.

The sequence is that of Large ribosomal subunit protein bL33 from Pelodictyon phaeoclathratiforme (strain DSM 5477 / BU-1).